The sequence spans 260 residues: Methylphosphonate hydroxylase (260 aa).

Lys-107 contacts 2-oxoglutarate. His-117, Asp-119, and His-195 together coordinate Fe cation.

This sequence belongs to the PhyH family. Fe(2+) is required as a cofactor.

It carries out the reaction methylphosphonate + 2-oxoglutarate + O2 = hydroxymethylphosphonate + succinate + CO2. In terms of biological role, part of an oxidative pathway for utilization of methylphosphonic acid as a phosphate source. Catalyzes the conversion of methylphosphonic acid to hydroxymethylphosphonic acid. Is specific for the hydroxylation of methylphosphonate. The sequence is that of Methylphosphonate hydroxylase from Gimesia maris (strain ATCC 29201 / DSM 8797 / 534-30) (Planctomyces maris).